A 1445-amino-acid polypeptide reads, in one-letter code: Protein HUA2-LIKE 1 (1445 aa).

Residues 20-77 (LGDLVLAKVKGFPAWPAKIGQPEDWNQAPDPKKHFVQFYGTGEIGFVTPPDIQPFTSE) form the PWWP domain. 7 disordered regions span residues 133–197 (KYLN…SPDP), 211–302 (TCTD…DLNI), 319–356 (FENE…SKRL), 409–439 (EHTS…SDSD), 460–491 (DDDD…ANAS), 641–685 (GIPK…TSTP), and 797–835 (LTPS…SLSG). Polar residues-rich tracts occupy residues 173–187 (QDSS…SPSS) and 211–225 (TCTD…NLVN). Composition is skewed to basic and acidic residues over residues 228 to 257 (RIIR…RAAT), 274 to 293 (GQDH…ESSD), and 331 to 350 (DESK…DQKQ). Polar residues-rich tracts occupy residues 660–673 (RVSS…NQRS) and 797–814 (LTPS…QAGT). The CID domain occupies 838 to 979 (EAAISRDTFE…RYIGDLGASG (142 aa)). Residues 1110 to 1203 (PATTCATELP…SLPLQPGFAP (94 aa)) form a disordered region. The segment covering 1124–1170 (GSPPLPHESPPSPPPQPPSSPPPPSSPPQLAPAPPPSDHCLPPPTAP) has biased composition (pro residues).

Expressed throughout young primordia, and vegetative and reproductive apices.

The protein resides in the nucleus. In terms of biological role, probable transcription factor that acts with partial redundancy with HULK2 and HULK3. Plays diverse and essential roles in the control of plant development, physiology and flowering time. In Arabidopsis thaliana (Mouse-ear cress), this protein is Protein HUA2-LIKE 1.